A 203-amino-acid polypeptide reads, in one-letter code: Synaptosomal-associated protein 25-B (203 aa).

Over residues 1–11 (MADEADMRNEL) the composition is skewed to basic and acidic residues. A disordered region spans residues 1–25 (MADEADMRNELTDMQARADQLGDES). T-SNARE coiled-coil homology domains lie at 19–81 (DQLG…LTDL) and 137–199 (DARE…ATKM).

This sequence belongs to the SNAP-25 family.

Its subcellular location is the synapse. It is found in the synaptosome. The protein resides in the cell membrane. May play an important role in the synaptic function of specific neuronal systems. Associates with proteins involved in vesicle docking and membrane fusion. The protein is Synaptosomal-associated protein 25-B (snap25b) of Carassius auratus (Goldfish).